Consider the following 370-residue polypeptide: Alanine racemase (370 aa).

Catalysis depends on K36, which acts as the Proton acceptor; specific for D-alanine. Residue K36 is modified to N6-(pyridoxal phosphate)lysine. Residue R134 participates in substrate binding. Residue Y265 is the Proton acceptor; specific for L-alanine of the active site. Substrate is bound at residue M313.

Belongs to the alanine racemase family. Pyridoxal 5'-phosphate is required as a cofactor.

The enzyme catalyses L-alanine = D-alanine. The protein operates within amino-acid biosynthesis; D-alanine biosynthesis; D-alanine from L-alanine: step 1/1. Functionally, catalyzes the interconversion of L-alanine and D-alanine. May also act on other amino acids. The protein is Alanine racemase (alr) of Desulforamulus reducens (strain ATCC BAA-1160 / DSM 100696 / MI-1) (Desulfotomaculum reducens).